The following is a 121-amino-acid chain: Flagellar protein FliT (121 aa).

The required for homodimerization stretch occupies residues 1 to 50 (MNHAPHLYFAWQQLVEKSQLMLRLATEEQWDELIASEMAYVNAVQEIAHL). The interval 60–98 (MQEQLRPMLRLILDNESKVKQLLQIRMDELAKLVGQSSV) is fliD binding.

Belongs to the FliT family. As to quaternary structure, homodimer. Interacts with FliD and FlhC.

Its subcellular location is the cytoplasm. It localises to the cytosol. Its function is as follows. Dual-function protein that regulates the transcription of class 2 flagellar operons and that also acts as an export chaperone for the filament-capping protein FliD. As a transcriptional regulator, acts as an anti-FlhDC factor; it directly binds FlhC, thus inhibiting the binding of the FlhC/FlhD complex to class 2 promoters, resulting in decreased expression of class 2 flagellar operons. As a chaperone, effects FliD transition to the membrane by preventing its premature polymerization, and by directing it to the export apparatus. The sequence is that of Flagellar protein FliT from Escherichia coli O157:H7.